The following is a 484-amino-acid chain: ATP synthase subunit beta, chloroplastic (484 aa).

Residue 163-170 (GGAGVGKT) participates in ATP binding.

The protein belongs to the ATPase alpha/beta chains family. As to quaternary structure, F-type ATPases have 2 components, CF(1) - the catalytic core - and CF(0) - the membrane proton channel. CF(1) has five subunits: alpha(3), beta(3), gamma(1), delta(1), epsilon(1). CF(0) has four main subunits: a(1), b(1), b'(1) and c(9-12).

It is found in the plastid. The protein resides in the chloroplast thylakoid membrane. The enzyme catalyses ATP + H2O + 4 H(+)(in) = ADP + phosphate + 5 H(+)(out). Functionally, produces ATP from ADP in the presence of a proton gradient across the membrane. The catalytic sites are hosted primarily by the beta subunits. This Stigeoclonium helveticum (Green alga) protein is ATP synthase subunit beta, chloroplastic.